The following is a 277-amino-acid chain: N-acetylmuramic acid 6-phosphate etherase (277 aa).

The 164-residue stretch at 53 to 216 (IIPRVKKGGR…STTIMIELGR (164 aa)) folds into the SIS domain. Residue Glu-81 is the Proton donor of the active site. Glu-112 is a catalytic residue.

Belongs to the GCKR-like family. MurNAc-6-P etherase subfamily. As to quaternary structure, homodimer.

The catalysed reaction is N-acetyl-D-muramate 6-phosphate + H2O = N-acetyl-D-glucosamine 6-phosphate + (R)-lactate. It functions in the pathway amino-sugar metabolism; N-acetylmuramate degradation. In terms of biological role, specifically catalyzes the cleavage of the D-lactyl ether substituent of MurNAc 6-phosphate, producing GlcNAc 6-phosphate and D-lactate. In Bacteroides thetaiotaomicron (strain ATCC 29148 / DSM 2079 / JCM 5827 / CCUG 10774 / NCTC 10582 / VPI-5482 / E50), this protein is N-acetylmuramic acid 6-phosphate etherase.